Consider the following 361-residue polypeptide: MTQVYNFSAGPAMLPVEVLRRAEQELRNWHGLGTSVMEISHRSKEFMQVAEEAEKDLRDLMQIPANYKVLFCHGGARAQFAAVPLNLLGDSRSADYIDGGYWAHSAVKEAQKYCTPNVIDVTTHDNGVTGIAPMKQWKLSDNAAYVHYCPNETIDGLAINEEPDFGNKVVVADYSSSILSRPIDVSRYGVIYAGAQKNIGPAGLTVVIVREDLLGKARTELPSILDYKVLAENDSMFNTPPTFAWYLSGLVFKWLKEQGGLGEMGKRNQAKAELLYGAIDRTDFYRNQVATANRSWMNVPFQMIDPSLDKLFLSEAEAQGLQALKGHRVAGGMRASIYNAMPIEGVKALTDFMAEFERRHG.

Position 42 (R42) interacts with L-glutamate. Pyridoxal 5'-phosphate contacts are provided by residues 76-77 (AR), W102, T153, D173, and Q196. Position 197 is an N6-(pyridoxal phosphate)lysine (K197). 238 to 239 (NT) is a pyridoxal 5'-phosphate binding site.

This sequence belongs to the class-V pyridoxal-phosphate-dependent aminotransferase family. SerC subfamily. In terms of assembly, homodimer. Pyridoxal 5'-phosphate is required as a cofactor.

The protein resides in the cytoplasm. The catalysed reaction is O-phospho-L-serine + 2-oxoglutarate = 3-phosphooxypyruvate + L-glutamate. It catalyses the reaction 4-(phosphooxy)-L-threonine + 2-oxoglutarate = (R)-3-hydroxy-2-oxo-4-phosphooxybutanoate + L-glutamate. The protein operates within amino-acid biosynthesis; L-serine biosynthesis; L-serine from 3-phospho-D-glycerate: step 2/3. It functions in the pathway cofactor biosynthesis; pyridoxine 5'-phosphate biosynthesis; pyridoxine 5'-phosphate from D-erythrose 4-phosphate: step 3/5. Catalyzes the reversible conversion of 3-phosphohydroxypyruvate to phosphoserine and of 3-hydroxy-2-oxo-4-phosphonooxybutanoate to phosphohydroxythreonine. The sequence is that of Phosphoserine aminotransferase from Yersinia enterocolitica serotype O:8 / biotype 1B (strain NCTC 13174 / 8081).